A 111-amino-acid chain; its full sequence is Secreted RxLR effector protein 81 (111 aa).

The N-terminal stretch at 1 to 16 (MLVSMLLIIFPNGVSL) is a signal peptide. Asparagine 52 carries N-linked (GlcNAc...) asparagine glycosylation. The segment at 73–92 (KKFSSSDEDKSRDVRRRLRP) is disordered. The short motif at 88-91 (RRLR) is the RxLR-dEER element.

The protein belongs to the RxLR effector family.

It localises to the secreted. It is found in the host nucleus. The protein resides in the host cytoplasm. Secreted effector that partially suppresses the host cell death induced by cell death-inducing proteins. This chain is Secreted RxLR effector protein 81, found in Plasmopara viticola (Downy mildew of grapevine).